A 481-amino-acid chain; its full sequence is Two-component response regulator ORR32 (481 aa).

The Response regulatory domain maps to 13–138; that stretch reads HVMLVDDDTK…TIALWRVVAW (126 aa). Asp-66 is modified (4-aspartylphosphate).

The protein belongs to the ARR family. Type-B subfamily. In terms of processing, two-component system major event consists of a His-to-Asp phosphorelay between a sensor histidine kinase (HK) and a response regulator (RR). In plants, the His-to-Asp phosphorelay involves an additional intermediate named Histidine-containing phosphotransfer protein (HPt). This multistep phosphorelay consists of a His-Asp-His-Asp sequential transfer of a phosphate group between first a His and an Asp of the HK protein, followed by the transfer to a conserved His of the HPt protein and finally the transfer to an Asp in the receiver domain of the RR protein.

Functions as a response regulator involved in His-to-Asp phosphorelay signal transduction system. Phosphorylation of the Asp residue in the receiver domain activates the ability of the protein to promote the transcription of target genes. May directly activate some type-A response regulators in response to cytokinins. In Oryza sativa subsp. japonica (Rice), this protein is Two-component response regulator ORR32.